The following is a 555-amino-acid chain: Glutamine--tRNA ligase (555 aa).

The short motif at 35–45 (PEPNGYLHIGH) is the 'HIGH' region element. ATP-binding positions include 36 to 38 (EPN) and 42 to 48 (HIGHAKS). Residues Asp-68 and Tyr-213 each coordinate L-glutamine. ATP contacts are provided by residues Thr-232 and 262 to 263 (RL). The 'KMSKS' region motif lies at 269-273 (ITSKR).

It belongs to the class-I aminoacyl-tRNA synthetase family. Monomer.

The protein localises to the cytoplasm. It carries out the reaction tRNA(Gln) + L-glutamine + ATP = L-glutaminyl-tRNA(Gln) + AMP + diphosphate. The sequence is that of Glutamine--tRNA ligase from Stutzerimonas stutzeri (strain A1501) (Pseudomonas stutzeri).